A 198-amino-acid chain; its full sequence is Dermorphin-2 (198 aa).

The first 20 residues, 1–20 (MSFLKKSLLLILFLGLVSLS), serve as a signal peptide directing secretion. Residues 21-45 (VCKEEKRVSEEENENEENHEEGSEM) constitute a propeptide that is removed on maturation. The disordered stretch occupies residues 24 to 198 (EEKRVSEEEN…AFGYPSGEAK (175 aa)). Ala49 bears the D-alanine (Ala) mark. Ser54 carries the post-translational modification Serine amide. Residues 56–65 (EAKKIKRESE) show a composition bias toward basic and acidic residues. Positions 56-80 (EAKKIKRESEEEKEIEENHEEGSEM) are excised as a propeptide. Position 84 is a D-alanine (Ala) (Ala84). At Ser89 the chain carries Serine amide. A propeptide spanning residues 91 to 115 (EAKKIKRESEEENENEENHEEGSEM) is cleaved from the precursor. Residues 100-109 (EEENENEENH) are compositionally biased toward acidic residues. A D-alanine (Ala) modification is found at Ala119. Ser124 carries the serine amide modification. A compositionally biased stretch (basic and acidic residues) spans 126 to 135 (EAKKIKRESE). Positions 126-150 (EAKKIKRESEEEKEIEENHEEGSEM) are excised as a propeptide. At Ala154 the chain carries D-alanine (Ala). At Ser159 the chain carries Serine amide. Residues 161–185 (EAKKIKRESEEENENEENHEEGSEM) constitute a propeptide that is removed on maturation. Residues 170–179 (EEENENEENH) show a composition bias toward acidic residues. D-alanine (Ala) is present on Ala189. The residue at position 194 (Ser194) is a Serine amide. Residues 196–198 (EAK) constitute a propeptide that is removed on maturation.

Belongs to the frog skin active peptide (FSAP) family. Dermorphin subfamily. Expressed by the skin glands.

The protein resides in the secreted. Its function is as follows. Dermorphin has a very potent opiate-like activity. It has high affinity and selectivity for mu-type opioid receptors. The polypeptide is Dermorphin-2 (Phyllomedusa sauvagei (Sauvage's leaf frog)).